A 424-amino-acid chain; its full sequence is Zinc metalloproteinase-disintegrin-like brevilysin H2b (424 aa).

Gln-1 bears the Pyrrolidone carboxylic acid mark. Residues 9-207 enclose the Peptidase M12B domain; sequence RYVKLAIVAD…YKPQCILNEP (199 aa). Asn-69 carries N-linked (GlcNAc...) asparagine glycosylation. Asp-96 contacts Ca(2+). Cystine bridges form between Cys-120/Cys-202, Cys-164/Cys-186, and Cys-166/Cys-169. His-145 provides a ligand contact to Zn(2+). Glu-146 is a catalytic residue. 2 residues coordinate Zn(2+): His-149 and His-155. Asn-185 carries an N-linked (GlcNAc...) asparagine glycan. Residues Cys-202, Asn-205, Val-217, Asn-220, Leu-222, Glu-224, Glu-227, and Asp-230 each coordinate Ca(2+). One can recognise a Disintegrin domain in the interval 215 to 301; the sequence is PPVCGNELLE…DCPTDDLQRN (87 aa). 14 disulfides stabilise this stretch: Cys-218–Cys-247, Cys-229–Cys-242, Cys-231–Cys-237, Cys-241–Cys-264, Cys-255–Cys-261, Cys-260–Cys-286, Cys-273–Cys-293, Cys-280–Cys-312, Cys-305–Cys-317, Cys-324–Cys-374, Cys-339–Cys-385, Cys-352–Cys-362, Cys-369–Cys-411, and Cys-405–Cys-417. The short motif at 279-281 is the D/ECD-tripeptide element; sequence DCD. The Ca(2+) site is built by Asp-281, Glu-284, and Asp-296.

This sequence belongs to the venom metalloproteinase (M12B) family. P-III subfamily. P-IIIa sub-subfamily. Monomer. Zn(2+) is required as a cofactor. Glycosylated. Expressed by the venom gland.

Its subcellular location is the secreted. With respect to regulation, its proteolytic activity is inhibited by EDTA, TPEN, 1,10-phenanthroline, and some thiol compounds, but is enhanced by alkaline earth metal ions (Mg2+, Ca2+, Sr2+, and Ba2+). Its activity is not modulated by urea (4 M). Its function is as follows. Non-hemorrhagic metalloproteinase that degrades fibrinogen. The alpha chain (FGA) is rapidly degraded, the beta chain (FGB) is degraded very slowly, while the gamma chain is left intact. Shows a prefential cleavage at X-Leu bonds. Cleaves insulin B chain at '29-His-|-Leu-30', '33-Ser-|-His-34', '38-Ala-|-Leu-39' and '40-Tyr-|-Leu-41' bonds. This Gloydius brevicauda (Korean slamosa snake) protein is Zinc metalloproteinase-disintegrin-like brevilysin H2b.